We begin with the raw amino-acid sequence, 142 residues long: MKIEQTLSIIKPNIISNNFIGNIINRLEQAKLYIIASKMIKLSWKEAVSFYIEHKNKSFFSDLINFMISHPIIVQILEGENAIKRNREIMGNTNPKIALAGTLRSDFSNDIIKNGVHGSDSEESADREIKFFFKKDRIFSRI.

Positions 11, 59, 87, 93, 104, and 114 each coordinate ATP. Residue His117 is the Pros-phosphohistidine intermediate of the active site.

Belongs to the NDK family. As to quaternary structure, homotetramer. Requires Mg(2+) as cofactor.

Its subcellular location is the cytoplasm. The catalysed reaction is a 2'-deoxyribonucleoside 5'-diphosphate + ATP = a 2'-deoxyribonucleoside 5'-triphosphate + ADP. The enzyme catalyses a ribonucleoside 5'-diphosphate + ATP = a ribonucleoside 5'-triphosphate + ADP. In terms of biological role, major role in the synthesis of nucleoside triphosphates other than ATP. The ATP gamma phosphate is transferred to the NDP beta phosphate via a ping-pong mechanism, using a phosphorylated active-site intermediate. The chain is Nucleoside diphosphate kinase from Wigglesworthia glossinidia brevipalpis.